The following is a 188-amino-acid chain: GTP cyclohydrolase 1 (188 aa).

Zn(2+) is bound by residues C78, H81, and C150.

Belongs to the GTP cyclohydrolase I family. In terms of assembly, toroid-shaped homodecamer, composed of two pentamers of five dimers.

It catalyses the reaction GTP + H2O = 7,8-dihydroneopterin 3'-triphosphate + formate + H(+). The protein operates within cofactor biosynthesis; 7,8-dihydroneopterin triphosphate biosynthesis; 7,8-dihydroneopterin triphosphate from GTP: step 1/1. The protein is GTP cyclohydrolase 1 of Halalkalibacterium halodurans (strain ATCC BAA-125 / DSM 18197 / FERM 7344 / JCM 9153 / C-125) (Bacillus halodurans).